The following is a 375-amino-acid chain: Actin, cytoplasmic (375 aa).

Belongs to the actin family.

It localises to the cytoplasm. It is found in the cytoskeleton. The catalysed reaction is ATP + H2O = ADP + phosphate + H(+). Actins are highly conserved proteins that are involved in various types of cell motility and are ubiquitously expressed in all eukaryotic cells. This is Actin, cytoplasmic from Oxytricha trifallax (Sterkiella histriomuscorum).